We begin with the raw amino-acid sequence, 423 residues long: Gamma-glutamyl phosphate reductase (423 aa).

It belongs to the gamma-glutamyl phosphate reductase family.

It localises to the cytoplasm. The catalysed reaction is L-glutamate 5-semialdehyde + phosphate + NADP(+) = L-glutamyl 5-phosphate + NADPH + H(+). It participates in amino-acid biosynthesis; L-proline biosynthesis; L-glutamate 5-semialdehyde from L-glutamate: step 2/2. In terms of biological role, catalyzes the NADPH-dependent reduction of L-glutamate 5-phosphate into L-glutamate 5-semialdehyde and phosphate. The product spontaneously undergoes cyclization to form 1-pyrroline-5-carboxylate. This Desulfovibrio desulfuricans (strain ATCC 27774 / DSM 6949 / MB) protein is Gamma-glutamyl phosphate reductase.